The sequence spans 487 residues: Cobyric acid synthase (487 aa).

In terms of domain architecture, GATase cobBQ-type spans 249–435; it reads GIDIAIVRLP…IHGIFDEGDF (187 aa). The active-site Nucleophile is Cys330. His427 is an active-site residue.

The protein belongs to the CobB/CobQ family. CobQ subfamily.

It participates in cofactor biosynthesis; adenosylcobalamin biosynthesis. Functionally, catalyzes amidations at positions B, D, E, and G on adenosylcobyrinic A,C-diamide. NH(2) groups are provided by glutamine, and one molecule of ATP is hydrogenolyzed for each amidation. This Clostridium perfringens (strain ATCC 13124 / DSM 756 / JCM 1290 / NCIMB 6125 / NCTC 8237 / Type A) protein is Cobyric acid synthase.